A 430-amino-acid chain; its full sequence is Protein trichome birefringence-like 24 (430 aa).

A helical; Signal-anchor for type II membrane protein membrane pass occupies residues 15–35 (VLLIKLISAILISFFAFRLFI). Residues 153 to 155 (GDS) carry the GDS motif motif. The DCXHWCLPGXXDXWN motif motif lies at 406–420 (DCLHWCLPGPFDYLN).

The protein belongs to the PC-esterase family. TBL subfamily.

Its subcellular location is the membrane. In terms of biological role, may act as a bridging protein that binds pectin and other cell wall polysaccharides. Probably involved in maintaining esterification of pectins. May be involved in the specific O-acetylation of cell wall polymers. The chain is Protein trichome birefringence-like 24 (TBL24) from Arabidopsis thaliana (Mouse-ear cress).